The following is a 427-amino-acid chain: Glutamate-1-semialdehyde 2,1-aminomutase (427 aa).

The residue at position 267 (K267) is an N6-(pyridoxal phosphate)lysine.

The protein belongs to the class-III pyridoxal-phosphate-dependent aminotransferase family. HemL subfamily. Homodimer. The cofactor is pyridoxal 5'-phosphate.

It localises to the cytoplasm. It carries out the reaction (S)-4-amino-5-oxopentanoate = 5-aminolevulinate. It functions in the pathway porphyrin-containing compound metabolism; protoporphyrin-IX biosynthesis; 5-aminolevulinate from L-glutamyl-tRNA(Glu): step 2/2. The chain is Glutamate-1-semialdehyde 2,1-aminomutase from Acetivibrio thermocellus (strain ATCC 27405 / DSM 1237 / JCM 9322 / NBRC 103400 / NCIMB 10682 / NRRL B-4536 / VPI 7372) (Clostridium thermocellum).